Reading from the N-terminus, the 65-residue chain is Large ribosomal subunit protein uL29 (65 aa).

The protein belongs to the universal ribosomal protein uL29 family.

This is Large ribosomal subunit protein uL29 from Lactobacillus acidophilus (strain ATCC 700396 / NCK56 / N2 / NCFM).